Consider the following 338-residue polypeptide: N-acetyl-gamma-glutamyl-phosphate reductase (338 aa).

Cys-148 is a catalytic residue.

This sequence belongs to the NAGSA dehydrogenase family. Type 1 subfamily.

The protein resides in the cytoplasm. It catalyses the reaction N-acetyl-L-glutamate 5-semialdehyde + phosphate + NADP(+) = N-acetyl-L-glutamyl 5-phosphate + NADPH + H(+). It participates in amino-acid biosynthesis; L-arginine biosynthesis; N(2)-acetyl-L-ornithine from L-glutamate: step 3/4. In terms of biological role, catalyzes the NADPH-dependent reduction of N-acetyl-5-glutamyl phosphate to yield N-acetyl-L-glutamate 5-semialdehyde. In Leptospira borgpetersenii serovar Hardjo-bovis (strain JB197), this protein is N-acetyl-gamma-glutamyl-phosphate reductase.